A 453-amino-acid polypeptide reads, in one-letter code: MEIDTSVFDFHQKVKEVILKEYKLNRELIMLKRCLRYKCMSPAAFYVQVLEVNNPYLINDVTAVTRIITNMMKCVPQLRKDGGKLKDSEIKELEDFIPGYIRYLQIVSEYALILFRGNPLPAVELLKWDPKLPLASYVFVDMNDIYTVSAIREHMDVDRILFDMVLDWCNVSSGWSGNVQKIRRTFRWYYEAVFKADEVIYVDRDEISTENLILFLFVYEEVIARQQPMNAIHTHGSYWNTFLKEFSSVPITMRSQDGGNKYIRHSILTAREKIPGKHVKLRSKEFNLFIHNGRRKLPASDVYTATLQIMWELTGKCFLDSSLLNMDKLREGMMFRKIKIRWHSIRDDLVITRLHTLNREQVIMRDFLVRCNVDANAKHKRKRLKPVETLTLFEKSRMESQNITLDYLLYTHSRLISHKAWQQTNKTSTLSAAQLNSEGHVISGKPDQVESQQ.

This is an uncharacterized protein from Magallana gigas (Pacific oyster).